The following is a 31-amino-acid chain: MGISEVQVFLALIIALIPGILADRLGKELNK.

The helical transmembrane segment at 7-26 (QVFLALIIALIPGILADRLG) threads the bilayer.

It belongs to the PsaM family.

It localises to the plastid. The protein localises to the chloroplast thylakoid membrane. The protein is Photosystem I reaction center subunit XII of Euglena deses.